The chain runs to 1273 residues: Lysine-specific histone demethylase 2 (1273 aa).

Residues 199 to 230 (ENFFDANSPSSQQFPSTYPSRSQNPLSSSGDG) show a composition bias toward polar residues. The disordered stretch occupies residues 199–237 (ENFFDANSPSSQQFPSTYPSRSQNPLSSSGDGSTAIHAG). Residues 247-307 (FSNYPYPLDA…LSKSVDNAVL (61 aa)) adopt a coiled-coil conformation. The SWIRM domain maps to 394 to 490 (AAEAARKCNL…YGCLSFDSSF (97 aa)). Residues 509–551 (IAVV…ILEA), threonine 517, glutamate 550, arginine 558, and 572–573 (TQ) contribute to the FAD site. The demethylase activity stretch occupies residues 542-1198 (LPPKVIILEA…GKILRYQRLT (657 aa)). The disordered stretch occupies residues 571–596 (ATQINHHTSNSNSISSNSTSLNPKDV). Positions 574–590 (INHHTSNSNSISSNSTS) are enriched in low complexity. Residues 681-767 (SVRISWISQF…NTVDTDFSKD (87 aa)) adopt a coiled-coil conformation. The HMG box DNA-binding region spans 1115 to 1195 (SKPNANPFLL…AYAGKILRYQ (81 aa)). Residues aspartate 1147 and 1156 to 1157 (ET) each bind FAD. The interval 1215 to 1273 (KCQDEPIPDDEARLFMQAQREEEQRKQTQDDNISKSREASDEEYHDDGSSDSGYNGTRY) is disordered. Residues 1233 to 1253 (QREEEQRKQTQDDNISKSREA) show a composition bias toward basic and acidic residues. The span at 1264-1273 (SDSGYNGTRY) shows a compositional bias: polar residues.

The protein belongs to the flavin monoamine oxidase family. As to quaternary structure, component of the SWM histone demethylase complex composed of at least lsd1, lsd2, phf1 and phf2. Interacts directly with lsd1. FAD serves as cofactor.

It is found in the nucleus. Functionally, catalytic component of the SWM histone demethylase complex that specifically demethylates H3K9me2, a specific tag for epigenetic transcriptional activation, thereby acting as a corepressor. Acts by oxidizing the substrate by FAD to generate the corresponding imine that is subsequently hydrolyzed. Has a role in regulating heterochromatin propagation and euchromatic transcription. Also has a gene activating role. This chain is Lysine-specific histone demethylase 2 (lsd2), found in Schizosaccharomyces pombe (strain 972 / ATCC 24843) (Fission yeast).